A 584-amino-acid polypeptide reads, in one-letter code: Breast carcinoma-amplified sequence 1 (584 aa).

3 disordered regions span residues 1–29 (MGNQMSVPQRVEDQENEPEAETYQDNASA), 59–280 (VATS…AAAI), and 297–377 (PNKA…GKLF). Polar residues-rich tracts occupy residues 59–69 (VATSSPETTEI) and 112–128 (ADSSLGSVKLDVSSNKA). Phosphoserine occurs at positions 124 and 192. Basic and acidic residues-rich tracts occupy residues 186 to 226 (SKPK…KVDE), 238 to 252 (PAGKDIVDGKEKEGQ), and 300 to 311 (AETKKDPEDTGA). At serine 314 the chain carries Phosphoserine. Residues 314–354 (SPTTSADLKSDKANFTSQETQGAGKNSKGCNPSGHTQSVTT) are compositionally biased toward polar residues. Over residues 357–366 (PAKEGTKEKS) the composition is skewed to basic and acidic residues. Phosphoserine is present on residues serine 381 and serine 399. A disordered region spans residues 415-584 (TVDLNEGDAA…VSIGPVGKSK (170 aa)). The span at 428–439 (TEAKLKREESKP) shows a compositional bias: basic and acidic residues. Threonine 480 carries the post-translational modification Phosphothreonine. A compositionally biased stretch (basic and acidic residues) spans 494–506 (KGKEGSSKDKKSA). Residues 525–540 (CTEQATVDTNSLQNGD) show a composition bias toward polar residues. The segment covering 541-550 (KLQKRPEKRQ) has biased composition (basic and acidic residues). Serine 552 carries the phosphoserine modification. The tract at residues 565 to 584 (MLDAQVQTDPVSIGPVGKSK) is interacts with DYNLL1 and DYNLL2.

As to quaternary structure, homodimer. Interacts with DYNLL1 and DYNLL2. As to expression, highly expressed in the brain and, more specifically, in oligodendrocytes (at protein level). Expressed in the prostate, and at lower levels in testis, intestine and colon. Overexpressed in most breast cancer cell lines and down-regulated in some colorectal tumors.

Its subcellular location is the cytoplasm. In terms of biological role, required for myelination. In Homo sapiens (Human), this protein is Breast carcinoma-amplified sequence 1 (BCAS1).